Reading from the N-terminus, the 521-residue chain is Cytochrome P450 monooxygenase astF (521 aa).

A helical membrane pass occupies residues 14 to 34; the sequence is TMATFLLPVAIGTIILLFLYG. N-linked (GlcNAc...) asparagine glycans are attached at residues Asn-198, Asn-218, Asn-268, and Asn-281. Cys-430 provides a ligand contact to heme.

This sequence belongs to the cytochrome P450 family. It depends on heme as a cofactor.

The protein resides in the membrane. The protein operates within secondary metabolite biosynthesis; terpenoid biosynthesis. Functionally, cytochrome P450 monooxygenase; part of the gene cluster that mediates the biosynthesis of astellolides, drimane-type sesquiterpene esters that show antimicrobial, anti-inflammatory, and anti-tumor activities. The first step in astellolide biosynthesis is performed by the sesquiterpene cyclase astC that catalyzes the formation of drimanyl pyrophosphate from farnesyl pyrophosphate. Drimanyl pyrophosphate is then dephosphorylated by the sesquiterpene phosphatase astI to produce drimanyl monophosphate which is further dephosphorylated to drim-8-ene-11-ol by atsK. Drim-8-ene-11-ol is converted to confertifolin, probably by the cytochrome P450 monooxygenase astD and/or the dehydrogenase astE. The cytochrome P450 monooxygenases astB, astF and astJ then hydroxylate confertifolin at C6, C14, or C15 to form trihydroxy confertifolin. The nonribosomal peptide synthetase astA catalyzes ester bond formation between trihydroxy contifolin and benzoic acid (BA) or 4-hydroxy benzoic acid (4HBA), leading to the formation of dideacetyl astellolides A and B, respectively. Finally, the O-acetyltransferase astG converts dideacetyl astellolides A and B into deacetyl astellolides A and B. The sequence is that of Cytochrome P450 monooxygenase astF from Aspergillus oryzae (strain ATCC 42149 / RIB 40) (Yellow koji mold).